The following is a 99-amino-acid chain: Large ribosomal subunit protein bL28 (99 aa).

This sequence belongs to the bacterial ribosomal protein bL28 family.

This chain is Large ribosomal subunit protein bL28, found in Rhodospirillum rubrum (strain ATCC 11170 / ATH 1.1.1 / DSM 467 / LMG 4362 / NCIMB 8255 / S1).